A 396-amino-acid chain; its full sequence is S-adenosylmethionine synthase (396 aa).

Residue His-16 coordinates ATP. Asp-18 contacts Mg(2+). Glu-44 contacts K(+). L-methionine-binding residues include Glu-57 and Gln-100. A flexible loop region spans residues 100–110 (QSVDINQGVDR). ATP is bound by residues 165 to 167 (DAK), Asp-240, 246 to 247 (RK), Ala-263, and Lys-267. An L-methionine-binding site is contributed by Asp-240. Lys-271 serves as a coordination point for L-methionine.

It belongs to the AdoMet synthase family. In terms of assembly, homotetramer; dimer of dimers. Mg(2+) serves as cofactor. K(+) is required as a cofactor.

Its subcellular location is the cytoplasm. It catalyses the reaction L-methionine + ATP + H2O = S-adenosyl-L-methionine + phosphate + diphosphate. The protein operates within amino-acid biosynthesis; S-adenosyl-L-methionine biosynthesis; S-adenosyl-L-methionine from L-methionine: step 1/1. Its function is as follows. Catalyzes the formation of S-adenosylmethionine (AdoMet) from methionine and ATP. The overall synthetic reaction is composed of two sequential steps, AdoMet formation and the subsequent tripolyphosphate hydrolysis which occurs prior to release of AdoMet from the enzyme. The protein is S-adenosylmethionine synthase of Pseudomonas aeruginosa (strain UCBPP-PA14).